Consider the following 331-residue polypeptide: Protein RecA (331 aa).

66–73 (GPESSGKT) is an ATP binding site.

The protein belongs to the RecA family.

The protein resides in the cytoplasm. Can catalyze the hydrolysis of ATP in the presence of single-stranded DNA, the ATP-dependent uptake of single-stranded DNA by duplex DNA, and the ATP-dependent hybridization of homologous single-stranded DNAs. It interacts with LexA causing its activation and leading to its autocatalytic cleavage. In Lactobacillus delbrueckii subsp. bulgaricus (strain ATCC 11842 / DSM 20081 / BCRC 10696 / JCM 1002 / NBRC 13953 / NCIMB 11778 / NCTC 12712 / WDCM 00102 / Lb 14), this protein is Protein RecA.